A 173-amino-acid chain; its full sequence is Lipoprotein signal peptidase (173 aa).

Helical transmembrane passes span 12–32 (WLWL…WTIQ), 67–87 (WQRY…VYLL), and 102–122 (ALIL…GYVI). Residues D123 and D141 contribute to the active site. Residues 137–157 (FNIADSAIFTGAVIMIFESFF) form a helical membrane-spanning segment.

Belongs to the peptidase A8 family.

The protein localises to the cell inner membrane. The catalysed reaction is Release of signal peptides from bacterial membrane prolipoproteins. Hydrolyzes -Xaa-Yaa-Zaa-|-(S,diacylglyceryl)Cys-, in which Xaa is hydrophobic (preferably Leu), and Yaa (Ala or Ser) and Zaa (Gly or Ala) have small, neutral side chains.. Its pathway is protein modification; lipoprotein biosynthesis (signal peptide cleavage). Its function is as follows. This protein specifically catalyzes the removal of signal peptides from prolipoproteins. In Psychromonas ingrahamii (strain DSM 17664 / CCUG 51855 / 37), this protein is Lipoprotein signal peptidase.